The primary structure comprises 267 residues: Regulatory protein RecX (267 aa).

Belongs to the RecX family.

The protein localises to the cytoplasm. Modulates RecA activity. The sequence is that of Regulatory protein RecX from Leuconostoc mesenteroides subsp. mesenteroides (strain ATCC 8293 / DSM 20343 / BCRC 11652 / CCM 1803 / JCM 6124 / NCDO 523 / NBRC 100496 / NCIMB 8023 / NCTC 12954 / NRRL B-1118 / 37Y).